A 162-amino-acid chain; its full sequence is Large ribosomal subunit protein uL15 (162 aa).

The disordered stretch occupies residues Met1–Arg41. A compositionally biased stretch (gly residues) spans Arg21 to Gly37.

This sequence belongs to the universal ribosomal protein uL15 family. In terms of assembly, part of the 50S ribosomal subunit.

Functionally, binds to the 23S rRNA. The polypeptide is Large ribosomal subunit protein uL15 (Rhodopseudomonas palustris (strain BisB18)).